The following is a 505-amino-acid chain: MKTDKKKSGIEPKVFFPPLIIVGILCWLTVRDLDAANNVINAVFSYVTNIWGWAFEWYMVVMLIGWFWLVFGPYAKKKLGDEPPEFSTTSWIFMMFASCTSAAVLFWGSIEIYYYISTPPFGLAPNSTGAKEIGLAYSLFHWGPLPWATYSFLSVAFAYFFFVRKMDVIRPSSTLVPLVGEKHAKGLFGTIVDNFYLVALIFAMGTSLGLATPLVTECMQYLFGIPHTLELDAIIITCWIILNAICVACGLQKGVRIASDVRSYLSFLMLGWVFIVSGASFIMNYFTDSVGTLLMYLPRMLFYTDPIGKSGFPQSWTVFYWAWWVIYAIQMSIFLARISRGRTVRELCFGMVLGLTASTWILWTVLGSNTLLLMDKNILNIPQLIDQHGVARAIIETWAALPLSTATMWGFFILCFIATVTLINACSYTLAMSTCREVRDGEEPPLLVRIGWSVLVGIIGIVLLALGGLKPIQTAIIAGGCPLFFVNIMVTLSFIKDAKTHWKDK.

The next 12 membrane-spanning stretches (helical) occupy residues 10–30 (IEPKVFFPPLIIVGILCWLTV), 50–70 (IWGWAFEWYMVVMLIGWFWLV), 92–112 (IFMMFASCTSAAVLFWGSIEI), 143–163 (GPLPWATYSFLSVAFAYFFFV), 195–215 (FYLVALIFAMGTSLGLATPLV), 231–251 (LDAIIITCWIILNAICVACGL), 263–283 (SYLSFLMLGWVFIVSGASFIM), 316–336 (WTVFYWAWWVIYAIQMSIFLA), 347–367 (LCFGMVLGLTASTWILWTVLG), 403–423 (LSTATMWGFFILCFIATVTLI), 446–466 (LLVRIGWSVLVGIIGIVLLAL), and 475–495 (AIIAGGCPLFFVNIMVTLSFI).

This sequence belongs to the BCCT transporter (TC 2.A.15) family. CaiT subfamily. As to quaternary structure, homotrimer.

The protein localises to the cell inner membrane. It carries out the reaction 4-(trimethylamino)butanoate(in) + (R)-carnitine(out) = 4-(trimethylamino)butanoate(out) + (R)-carnitine(in). It participates in amine and polyamine metabolism; carnitine metabolism. Its function is as follows. Catalyzes the exchange of L-carnitine for gamma-butyrobetaine. The polypeptide is L-carnitine/gamma-butyrobetaine antiporter (Salmonella arizonae (strain ATCC BAA-731 / CDC346-86 / RSK2980)).